The chain runs to 33 residues: Tail virion protein G9P (33 aa).

A helical transmembrane segment spans residues 5–25 (VGSFLGAYFLGFALFYGIGFF).

It belongs to the inovirus G9P protein family.

The protein resides in the virion. It is found in the host membrane. Its function is as follows. May initiate with G7P the virion concomitant assembly-budding process, by interacting with the packaging signal of the viral genome. The assembly-budding takes place at the host inner membrane. In turn, G7P and G9P are present at the end of the filamentous virion that emerges first from the bacterial host. This is Tail virion protein G9P (IX) from Salmonella phage IKe (Bacteriophage IKe).